Consider the following 708-residue polypeptide: Leukotoxin translocation ATP-binding protein LktB (708 aa).

In terms of domain architecture, Peptidase C39 spans 1-126 (MEANHQRNDL…ACYQGQLILV (126 aa)). The region spanning 155–437 (FLETLIVSIF…LAQLWQDFQQ (283 aa)) is the ABC transmembrane type-1 domain. 5 helical membrane-spanning segments follow: residues 159 to 179 (LIVS…FQVV), 192 to 212 (LNII…LSGL), 270 to 290 (ALTS…MWYY), 296 to 316 (LVIL…SPIL), and 389 to 409 (VMVI…LSIG). The ABC transporter domain maps to 469-704 (IAFKNIRFRY…SNGLYSYLHQ (236 aa)). 503–510 (GRSGSGKS) lines the ATP pocket.

The protein belongs to the ABC transporter superfamily. Protein-1 exporter (TC 3.A.1.109) family. Homodimer.

The protein localises to the cell inner membrane. The catalysed reaction is ATP + H2O + proteinSide 1 = ADP + phosphate + proteinSide 2.. Functionally, part of the ABC transporter complex LktBD involved in leukotoxin export. Transmembrane domains (TMD) form a pore in the inner membrane and the ATP-binding domain (NBD) is responsible for energy generation. This Mannheimia glucosida protein is Leukotoxin translocation ATP-binding protein LktB (lktB).